A 125-amino-acid chain; its full sequence is VTDSVIGEGCVIKNCKIHHSVVGLRSCISEGAIIEDTLLMGADYYAETEADKKLLAENGGIPIGIGKNSHIRKAIIDKNARIGDNVKILNADNVQEAARETDGYFIKGGIVTVIKDALLPSGTVI.

The protein belongs to the bacterial/plant glucose-1-phosphate adenylyltransferase family. As to quaternary structure, heterotetramer. Leaves.

It is found in the plastid. The protein localises to the chloroplast. Its subcellular location is the amyloplast. It carries out the reaction alpha-D-glucose 1-phosphate + ATP + H(+) = ADP-alpha-D-glucose + diphosphate. It participates in glycan biosynthesis; starch biosynthesis. With respect to regulation, activated by 3'phosphoglycerate, inhibited by orthophosphate. Allosteric regulation. In terms of biological role, this protein plays a role in synthesis of starch. It catalyzes the synthesis of the activated glycosyl donor, ADP-glucose from Glc-1-P and ATP. The polypeptide is Glucose-1-phosphate adenylyltransferase small subunit (GLG1) (Zea mays (Maize)).